Reading from the N-terminus, the 159-residue chain is Ribosomal RNA large subunit methyltransferase H (159 aa).

Residues L76, G108, and F127–F132 each bind S-adenosyl-L-methionine.

It belongs to the RNA methyltransferase RlmH family. Homodimer.

The protein resides in the cytoplasm. It catalyses the reaction pseudouridine(1915) in 23S rRNA + S-adenosyl-L-methionine = N(3)-methylpseudouridine(1915) in 23S rRNA + S-adenosyl-L-homocysteine + H(+). Specifically methylates the pseudouridine at position 1915 (m3Psi1915) in 23S rRNA. The polypeptide is Ribosomal RNA large subunit methyltransferase H (Bifidobacterium animalis subsp. lactis (strain AD011)).